Consider the following 506-residue polypeptide: Aluminum-activated malate transporter 7 (506 aa).

6 helical membrane passes run 28-48 (VGLVLALVSSFYYYQPLYDSF), 52-72 (AMWAVMTVVVVFEFSVGATLG), 78-98 (VAATLFAGGLGIGAHHLASMS), 104-124 (PILLAVFVFVQAALSTFVRFF), 130-150 (RYDYSLLIFILTFALISVSGF), and 166-186 (VIIGGLSCVIISIFVCPVWAG). The tract at residues 461-485 (DDGNNDDTSKNDNGSKEVSIHEKHE) is disordered. Over residues 467 to 485 (DTSKNDNGSKEVSIHEKHE) the composition is skewed to basic and acidic residues.

This sequence belongs to the aromatic acid exporter (TC 2.A.85) family.

The protein localises to the membrane. Malate transporter. This chain is Aluminum-activated malate transporter 7 (ALMT7), found in Arabidopsis thaliana (Mouse-ear cress).